The chain runs to 388 residues: Xylose isomerase (388 aa).

Residues H54 and D57 contribute to the active site. 7 residues coordinate Mg(2+): E181, E217, H220, D245, D255, D257, and D287.

Belongs to the xylose isomerase family. In terms of assembly, homotetramer. It depends on Mg(2+) as a cofactor.

The protein resides in the cytoplasm. The enzyme catalyses alpha-D-xylose = alpha-D-xylulofuranose. Its function is as follows. Involved in D-xylose catabolism. The polypeptide is Xylose isomerase (xylA) (Streptomyces murinus).